A 208-amino-acid polypeptide reads, in one-letter code: 3-demethoxyubiquinol 3-hydroxylase (208 aa).

Glutamate 57, glutamate 87, histidine 90, glutamate 139, glutamate 171, and histidine 174 together coordinate Fe cation.

The protein belongs to the COQ7 family. Fe cation is required as a cofactor.

The protein localises to the cell membrane. It carries out the reaction a 5-methoxy-2-methyl-3-(all-trans-polyprenyl)benzene-1,4-diol + AH2 + O2 = a 3-demethylubiquinol + A + H2O. Its pathway is cofactor biosynthesis; ubiquinone biosynthesis. Functionally, catalyzes the hydroxylation of 2-nonaprenyl-3-methyl-6-methoxy-1,4-benzoquinol during ubiquinone biosynthesis. The polypeptide is 3-demethoxyubiquinol 3-hydroxylase (Burkholderia lata (strain ATCC 17760 / DSM 23089 / LMG 22485 / NCIMB 9086 / R18194 / 383)).